A 428-amino-acid chain; its full sequence is Gamma-glutamyl phosphate reductase (428 aa).

Belongs to the gamma-glutamyl phosphate reductase family.

The protein resides in the cytoplasm. The enzyme catalyses L-glutamate 5-semialdehyde + phosphate + NADP(+) = L-glutamyl 5-phosphate + NADPH + H(+). Its pathway is amino-acid biosynthesis; L-proline biosynthesis; L-glutamate 5-semialdehyde from L-glutamate: step 2/2. In terms of biological role, catalyzes the NADPH-dependent reduction of L-glutamate 5-phosphate into L-glutamate 5-semialdehyde and phosphate. The product spontaneously undergoes cyclization to form 1-pyrroline-5-carboxylate. The protein is Gamma-glutamyl phosphate reductase of Clostridium tetani (strain Massachusetts / E88).